Reading from the N-terminus, the 155-residue chain is dCTP deaminase (155 aa).

DCTP contacts are provided by residues 79–84 (RSSLAR), Asp-95, Gln-124, and Tyr-138.

This sequence belongs to the dCTP deaminase family. As to quaternary structure, homotrimer.

The catalysed reaction is dCTP + H2O + H(+) = dUTP + NH4(+). It participates in pyrimidine metabolism; dUMP biosynthesis; dUMP from dCTP (dUTP route): step 1/2. In terms of biological role, catalyzes the deamination of dCTP to dUTP. The protein is dCTP deaminase of Thermococcus kodakarensis (strain ATCC BAA-918 / JCM 12380 / KOD1) (Pyrococcus kodakaraensis (strain KOD1)).